We begin with the raw amino-acid sequence, 392 residues long: tRNA (guanine(6)-N2)-methyltransferase (392 aa).

The 111-residue stretch at 73–183 (SAIPLLNHFS…DSELFVGVDT (111 aa)) folds into the THUMP domain. S-adenosyl-L-methionine is bound by residues 199–203 (HPAHL), 230–232 (SGT), Glu-275, 303–304 (DA), and Asn-317.

Belongs to the methyltransferase superfamily.

The protein localises to the cytoplasm. It carries out the reaction guanosine(6) in tRNA + S-adenosyl-L-methionine = N(2)-methylguanosine(6) in tRNA + S-adenosyl-L-homocysteine + H(+). Its function is as follows. S-adenosyl-L-methionine-dependent methyltransferase that catalyzes the methylation of the guanosine nucleotide at position 6 (m2G6) in tRNA. The sequence is that of tRNA (guanine(6)-N2)-methyltransferase from Archaeoglobus fulgidus (strain ATCC 49558 / DSM 4304 / JCM 9628 / NBRC 100126 / VC-16).